Here is a 334-residue protein sequence, read N- to C-terminus: MSPPSATYDVVAAAATSVAKTNKPSTAHGSLTSTSTILDEFAGKWDDFSFGHIRESQVSRAMTRRYFEDLDTYAESDIVIVGAGSCGLSTAYVLGKARPDLKIAVIEASVSPGGGAWLGGQLFSAMVLRKPADRFLDDLGVPYEEEPSNPNMVVIKHAALFTSTLLSKVLSFPNIKLFNATCVEDLITRPAPAAGDGEGIRIAGVVTNWTLVTLHHDDHSCMDPNTINAPLVISTTGHDGPFGAFCAKRLVSMAAIEKLGGMRGLDMNSAEEAIVKNTREVTKGLIIGGMELSEIDGWHRMGPIFSAMMLSGVRAAEVALEVFEERKRECADKK.

Substrate contacts are provided by residues cysteine 86, glutamate 107–alanine 108, glycine 115, and valine 183. 2,3-didehydroalanine (Cys) is present on cysteine 221. Residues aspartate 223, histidine 238, methionine 290, and arginine 300–glycine 302 each bind substrate.

The protein belongs to the THI4 family. In terms of assembly, homooctamer. The cofactor is Fe cation. During the catalytic reaction, a sulfide is transferred from Cys-221 to a reaction intermediate, generating a dehydroalanine residue.

The protein resides in the cytoplasm. The protein localises to the nucleus. The catalysed reaction is [ADP-thiazole synthase]-L-cysteine + glycine + NAD(+) = [ADP-thiazole synthase]-dehydroalanine + ADP-5-ethyl-4-methylthiazole-2-carboxylate + nicotinamide + 3 H2O + 2 H(+). Involved in biosynthesis of the thiamine precursor thiazole. Catalyzes the conversion of NAD and glycine to adenosine diphosphate 5-(2-hydroxyethyl)-4-methylthiazole-2-carboxylic acid (ADT), an adenylated thiazole intermediate. The reaction includes an iron-dependent sulfide transfer from a conserved cysteine residue of the protein to a thiazole intermediate. The enzyme can only undergo a single turnover, which suggests it is a suicide enzyme. May have additional roles in adaptation to various stress conditions and in DNA damage tolerance. The chain is Thiamine thiazole synthase from Ajellomyces capsulatus (strain G186AR / H82 / ATCC MYA-2454 / RMSCC 2432) (Darling's disease fungus).